We begin with the raw amino-acid sequence, 174 residues long: Gamma-crystallin E (174 aa).

2 consecutive Beta/gamma crystallin 'Greek key' domains span residues 2–40 (GKIT…RVDS) and 41–83 (GCWM…RLIP). The interval 84–87 (HSSS) is connecting peptide. Beta/gamma crystallin 'Greek key' domains are found at residues 88–128 (HRIR…HVME) and 129–171 (GYWV…RRIM).

Belongs to the beta/gamma-crystallin family. Detected in the superior olivary complex and fibers of the ventral aoustic stria of the auditory hindbrain.

Crystallins are the dominant structural components of the vertebrate eye lens. This chain is Gamma-crystallin E (Cryge), found in Rattus norvegicus (Rat).